The following is an 81-amino-acid chain: Conotoxin Eb11.3 (81 aa).

The N-terminal stretch at 1-23 is a signal peptide; that stretch reads MMFRLTSVWCLLVIVLLNSAVDG. 4 disulfides stabilise this stretch: Cys-27–Cys-41, Cys-34–Cys-48, Cys-40–Cys-56, and Cys-47–Cys-62. Leucine amide is present on Leu-69. Residues 73–81 constitute a propeptide that is removed on maturation; that stretch reads AQYKRFFRR.

This sequence belongs to the conotoxin I2 superfamily. In terms of tissue distribution, expressed by the venom duct.

It is found in the secreted. This is Conotoxin Eb11.3 from Conus eburneus (Ivory cone).